The chain runs to 538 residues: [Pyruvate dehydrogenase [acetyl-transferring]]-phosphatase 1, mitochondrial (538 aa).

A mitochondrion-targeting transit peptide spans 1-71 (MPAPTQLFFP…WWQYTQGRRY (71 aa)). Residues 109–525 (ILGFDSNQLP…DDITIIVVQF (417 aa)) form the PPM-type phosphatase domain. The Mn(2+) site is built by Asp144 and Gly145. Residue Lys202 is modified to N6-acetyllysine. Asp418 and Asp516 together coordinate Mn(2+).

Belongs to the PP2C family. As to quaternary structure, heterodimer of a catalytic (PDP1) and a regulatory (PDPR) subunit. Mn(2+) is required as a cofactor. The cofactor is Mg(2+).

It localises to the mitochondrion. It carries out the reaction O-phospho-L-seryl-[pyruvate dehydrogenase E1 alpha subunit] + H2O = L-seryl-[pyruvate dehydrogenase E1 alpha subunit] + phosphate. With respect to regulation, magnesium-dependent and calcium-stimulated. PDP1 activity strongly depends on its Ca(2+)-dependent binding to the lipoyl domain of E2 subunit of component of the pyruvate dehydrogenase complex. Mitochondrial enzyme that catalyzes the dephosphorylation and concomitant reactivation of the alpha subunit of the E1 component of the pyruvate dehydrogenase complex (PDC), thereby stimulating the conversion of pyruvate into acetyl-CoA. The chain is [Pyruvate dehydrogenase [acetyl-transferring]]-phosphatase 1, mitochondrial (Pdp1) from Mus musculus (Mouse).